Reading from the N-terminus, the 414-residue chain is Esterase FrsA (414 aa).

The protein belongs to the FrsA family.

It carries out the reaction a carboxylic ester + H2O = an alcohol + a carboxylate + H(+). Functionally, catalyzes the hydrolysis of esters. In Klebsiella pneumoniae (strain 342), this protein is Esterase FrsA.